The chain runs to 374 residues: Flap endonuclease 1 (374 aa).

An N-domain region spans residues 1 to 105 (MGVKGLNKLI…GELEKRLLRR (105 aa)). Residue D34 participates in Mg(2+) binding. DNA is bound by residues R47 and R71. Mg(2+) is bound by residues D87, E159, E161, D180, and D182. Positions 123–254 (DHLKFEKRLV…VTAYKLIKEH (132 aa)) are I-domain. Residue E159 participates in DNA binding. Positions 232 and 234 each coordinate DNA. Residue D234 coordinates Mg(2+). An interaction with PCNA region spans residues 339-347 (VQGRLDSFF). The tract at residues 353–374 (DDGKDKKRKSTAKDTKSKKQKK) is disordered.

Belongs to the XPG/RAD2 endonuclease family. FEN1 subfamily. In terms of assembly, interacts with PCNA. Three molecules of RAD27 bind to one PCNA trimer with each molecule binding to one PCNA monomer. PCNA stimulates the nuclease activity without altering cleavage specificity. It depends on Mg(2+) as a cofactor. Phosphorylated. Phosphorylation upon DNA damage induces relocalization to the nuclear plasma.

It is found in the nucleus. The protein localises to the nucleolus. It localises to the nucleoplasm. The protein resides in the mitochondrion. In terms of biological role, structure-specific nuclease with 5'-flap endonuclease and 5'-3' exonuclease activities involved in DNA replication and repair. During DNA replication, cleaves the 5'-overhanging flap structure that is generated by displacement synthesis when DNA polymerase encounters the 5'-end of a downstream Okazaki fragment. It enters the flap from the 5'-end and then tracks to cleave the flap base, leaving a nick for ligation. Also involved in the long patch base excision repair (LP-BER) pathway, by cleaving within the apurinic/apyrimidinic (AP) site-terminated flap. Acts as a genome stabilization factor that prevents flaps from equilibrating into structures that lead to duplications and deletions. Also possesses 5'-3' exonuclease activity on nicked or gapped double-stranded DNA, and exhibits RNase H activity. Also involved in replication and repair of rDNA and in repairing mitochondrial DNA. This is Flap endonuclease 1 from Candida tropicalis (strain ATCC MYA-3404 / T1) (Yeast).